The sequence spans 315 residues: Aspartate carbamoyltransferase catalytic subunit (315 aa).

Carbamoyl phosphate-binding residues include Arg-54 and Thr-55. Lys-82 is a binding site for L-aspartate. Arg-104, His-134, and Gln-137 together coordinate carbamoyl phosphate. L-aspartate contacts are provided by Arg-174 and Arg-229. Carbamoyl phosphate is bound by residues Gly-270 and Pro-271.

This sequence belongs to the aspartate/ornithine carbamoyltransferase superfamily. ATCase family. In terms of assembly, heterododecamer (2C3:3R2) of six catalytic PyrB chains organized as two trimers (C3), and six regulatory PyrI chains organized as three dimers (R2).

The enzyme catalyses carbamoyl phosphate + L-aspartate = N-carbamoyl-L-aspartate + phosphate + H(+). It functions in the pathway pyrimidine metabolism; UMP biosynthesis via de novo pathway; (S)-dihydroorotate from bicarbonate: step 2/3. In terms of biological role, catalyzes the condensation of carbamoyl phosphate and aspartate to form carbamoyl aspartate and inorganic phosphate, the committed step in the de novo pyrimidine nucleotide biosynthesis pathway. In Leifsonia xyli subsp. xyli (strain CTCB07), this protein is Aspartate carbamoyltransferase catalytic subunit.